The primary structure comprises 123 residues: uncharacterized protein (123 aa).

The disordered stretch occupies residues 89–123 (GVGGRKLGSEGQSLSENSEQRSLMRWGCGGSSERR). Positions 98–109 (EGQSLSENSEQR) are enriched in polar residues.

This is an uncharacterized protein from Encephalitozoon cuniculi (strain GB-M1) (Microsporidian parasite).